The chain runs to 104 residues: uncharacterized protein (104 aa).

This is an uncharacterized protein from Dictyostelium discoideum (Social amoeba).